The primary structure comprises 165 residues: Nucleoside-triphosphatase THEP1 (165 aa).

Residues 7–14 (GRPGVGKT) and 93–100 (LVIIDEVG) each bind ATP.

This sequence belongs to the THEP1 NTPase family.

The enzyme catalyses a ribonucleoside 5'-triphosphate + H2O = a ribonucleoside 5'-diphosphate + phosphate + H(+). Functionally, has nucleotide phosphatase activity towards ATP, GTP, CTP, TTP and UTP. May hydrolyze nucleoside diphosphates with lower efficiency. In Archaeoglobus fulgidus (strain ATCC 49558 / DSM 4304 / JCM 9628 / NBRC 100126 / VC-16), this protein is Nucleoside-triphosphatase THEP1.